The chain runs to 260 residues: Malonyl-[acyl-carrier protein] O-methyltransferase (260 aa).

Belongs to the methyltransferase superfamily.

The catalysed reaction is malonyl-[ACP] + S-adenosyl-L-methionine = malonyl-[ACP] methyl ester + S-adenosyl-L-homocysteine. Its pathway is cofactor biosynthesis; biotin biosynthesis. Its function is as follows. Converts the free carboxyl group of a malonyl-thioester to its methyl ester by transfer of a methyl group from S-adenosyl-L-methionine (SAM). It allows to synthesize pimeloyl-ACP via the fatty acid synthetic pathway. This Chlorobium phaeovibrioides (strain DSM 265 / 1930) (Prosthecochloris vibrioformis (strain DSM 265)) protein is Malonyl-[acyl-carrier protein] O-methyltransferase.